Here is a 294-residue protein sequence, read N- to C-terminus: Cytidine deaminase (294 aa).

2 CMP/dCMP-type deaminase domains span residues 48–168 (DEDA…FGPK) and 186–294 (LTGD…VLLA). A substrate-binding site is contributed by 89-91 (NME). His-102 is a Zn(2+) binding site. Glu-104 (proton donor) is an active-site residue. Residues Cys-129 and Cys-132 each contribute to the Zn(2+) site.

This sequence belongs to the cytidine and deoxycytidylate deaminase family. As to quaternary structure, homodimer. The cofactor is Zn(2+).

The enzyme catalyses cytidine + H2O + H(+) = uridine + NH4(+). It catalyses the reaction 2'-deoxycytidine + H2O + H(+) = 2'-deoxyuridine + NH4(+). Functionally, this enzyme scavenges exogenous and endogenous cytidine and 2'-deoxycytidine for UMP synthesis. In Shigella dysenteriae serotype 1 (strain Sd197), this protein is Cytidine deaminase.